The chain runs to 381 residues: tRNA pseudouridine synthase D (381 aa).

The Nucleophile role is filled by aspartate 81. Residues 160-335 (GMPNYFGSQR…TLGSRRFFWV (176 aa)) form the TRUD domain.

It belongs to the pseudouridine synthase TruD family.

It catalyses the reaction uridine(13) in tRNA = pseudouridine(13) in tRNA. Functionally, responsible for synthesis of pseudouridine from uracil-13 in transfer RNAs. This is tRNA pseudouridine synthase D from Helicobacter pylori (strain G27).